The sequence spans 153 residues: Peptide deformylase (153 aa).

Fe cation-binding residues include C87 and H129. E130 is a catalytic residue. Residue H133 participates in Fe cation binding.

The protein belongs to the polypeptide deformylase family. The cofactor is Fe(2+).

The enzyme catalyses N-terminal N-formyl-L-methionyl-[peptide] + H2O = N-terminal L-methionyl-[peptide] + formate. Its function is as follows. Removes the formyl group from the N-terminal Met of newly synthesized proteins. Requires at least a dipeptide for an efficient rate of reaction. N-terminal L-methionine is a prerequisite for activity but the enzyme has broad specificity at other positions. This chain is Peptide deformylase, found in Dictyoglomus thermophilum (strain ATCC 35947 / DSM 3960 / H-6-12).